The primary structure comprises 392 residues: Small ribosomal subunit protein bS1 (392 aa).

S1 motif domains are found at residues 16–90 (GDKV…LSKR), 108–173 (DEVI…LSRK), 194–262 (GDVI…LSIK), and 279–348 (DDVI…LSIK). The tract at residues 361–380 (ASTTQSYLEDDNDEDKPTLG) is disordered.

This sequence belongs to the bacterial ribosomal protein bS1 family.

Its function is as follows. Binds mRNA; thus facilitating recognition of the initiation point. It is needed to translate mRNA with a short Shine-Dalgarno (SD) purine-rich sequence. This chain is Small ribosomal subunit protein bS1 (rpsA), found in Staphylococcus epidermidis (strain ATCC 35984 / DSM 28319 / BCRC 17069 / CCUG 31568 / BM 3577 / RP62A).